We begin with the raw amino-acid sequence, 561 residues long: Protein NRT1/ PTR FAMILY 5.13 (561 aa).

A helical transmembrane segment spans residues alanine 78–leucine 98. Threonine 103 carries the phosphothreonine modification. Transmembrane regions (helical) follow at residues isoleucine 104 to leucine 124, serine 133 to glycine 153, phenylalanine 183 to valine 203, tryptophan 211 to leucine 231, isoleucine 324 to phenylalanine 344, isoleucine 361 to tyrosine 381, isoleucine 405 to lysine 425, isoleucine 447 to glycine 467, alanine 486 to isoleucine 506, and tyrosine 530 to serine 550.

This sequence belongs to the major facilitator superfamily. Proton-dependent oligopeptide transporter (POT/PTR) (TC 2.A.17) family. In terms of tissue distribution, expressed in roots, flowers and siliques. Detected in stems and leaves.

The protein localises to the membrane. The polypeptide is Protein NRT1/ PTR FAMILY 5.13 (NPF5.13) (Arabidopsis thaliana (Mouse-ear cress)).